A 346-amino-acid chain; its full sequence is Mitogen-activated protein kinase kinase 1c (346 aa).

Positions 70-332 constitute a Protein kinase domain; it reads LELVRFLGKG…TTDLLKHPFL (263 aa). ATP contacts are provided by residues 76–84 and Lys99; that span reads LGKGAGGTV. Asp194 serves as the catalytic Proton acceptor.

The protein belongs to the protein kinase superfamily. STE Ser/Thr protein kinase family. MAP kinase kinase subfamily.

The catalysed reaction is L-seryl-[protein] + ATP = O-phospho-L-seryl-[protein] + ADP + H(+). It catalyses the reaction L-threonyl-[protein] + ATP = O-phospho-L-threonyl-[protein] + ADP + H(+). The enzyme catalyses L-tyrosyl-[protein] + ATP = O-phospho-L-tyrosyl-[protein] + ADP + H(+). The CERK1, MEKK1a/b, MKK1a/b/c and MPK4a/b proteins are involved in pathogen defense. The pathway induces rapid growth inhibition, cell wall depositions and accumulation of defense-related transcripts. This protein is required for full defense response to fungal pathogen chitin. The polypeptide is Mitogen-activated protein kinase kinase 1c (Physcomitrium patens (Spreading-leaved earth moss)).